The following is a 550-amino-acid chain: Glucose-6-phosphate isomerase (550 aa).

E356 (proton donor) is an active-site residue. Active-site residues include H387 and K515.

The protein belongs to the GPI family.

Its subcellular location is the cytoplasm. The enzyme catalyses alpha-D-glucose 6-phosphate = beta-D-fructose 6-phosphate. It participates in carbohydrate biosynthesis; gluconeogenesis. The protein operates within carbohydrate degradation; glycolysis; D-glyceraldehyde 3-phosphate and glycerone phosphate from D-glucose: step 2/4. Its function is as follows. Catalyzes the reversible isomerization of glucose-6-phosphate to fructose-6-phosphate. This chain is Glucose-6-phosphate isomerase, found in Photobacterium profundum (strain SS9).